The sequence spans 508 residues: Photosystem II CP47 reaction center protein (508 aa).

A run of 6 helical transmembrane segments spans residues 21 to 36, 101 to 115, 140 to 156, 203 to 218, 237 to 252, and 457 to 472; these read SVHI…WAGS, IVFS…IWHW, GIHL…FGAF, IAAG…FHLS, VLSS…AFVV, and SFAL…HGAR.

This sequence belongs to the PsbB/PsbC family. PsbB subfamily. In terms of assembly, PSII is composed of 1 copy each of membrane proteins PsbA, PsbB, PsbC, PsbD, PsbE, PsbF, PsbH, PsbI, PsbJ, PsbK, PsbL, PsbM, PsbT, PsbX, PsbY, PsbZ, Psb30/Ycf12, at least 3 peripheral proteins of the oxygen-evolving complex and a large number of cofactors. It forms dimeric complexes. Binds multiple chlorophylls. PSII binds additional chlorophylls, carotenoids and specific lipids. serves as cofactor.

It is found in the plastid. The protein resides in the chloroplast thylakoid membrane. In terms of biological role, one of the components of the core complex of photosystem II (PSII). It binds chlorophyll and helps catalyze the primary light-induced photochemical processes of PSII. PSII is a light-driven water:plastoquinone oxidoreductase, using light energy to abstract electrons from H(2)O, generating O(2) and a proton gradient subsequently used for ATP formation. The sequence is that of Photosystem II CP47 reaction center protein from Lemna minor (Common duckweed).